The chain runs to 428 residues: AP-1 complex subunit mu-1 (428 aa).

An MHD domain is found at 170–426 (KNEVFLDVIE…ITMAGEYELR (257 aa)).

The protein belongs to the adaptor complexes medium subunit family. In terms of assembly, adaptor protein complex 1 (AP-1) is a heterotetramer composed of two large adaptins (gamma-type subunit and beta-type subunit), a medium adaptin (mu-type subunit) and a small adaptin (sigma-type subunit).

The protein localises to the golgi apparatus. Its subcellular location is the cytoplasmic vesicle. It localises to the clathrin-coated vesicle membrane. Subunit of clathrin-associated adaptor protein complex 1 that plays a role in protein sorting at the trans-Golgi network and early endosomes (TGN/EE). The AP complexes mediate the recruitment of clathrin to membranes and the recognition of sorting signals within the cytosolic tails of transmembrane cargo molecules. Functions redundantly with AP1M2 in multiple post-Golgi trafficking pathways leading from the TGN to the vacuole, the plasma membrane, and the cell-division plane. The sequence is that of AP-1 complex subunit mu-1 (AP1M1) from Arabidopsis thaliana (Mouse-ear cress).